A 389-amino-acid polypeptide reads, in one-letter code: Urotensin-2 receptor (389 aa).

Residues 1 to 10 (MALTPESPSS) show a composition bias toward polar residues. The tract at residues 1–39 (MALTPESPSSFPGLAATGSSVPEPPGGPNATLNSSWASP) is disordered. The Extracellular segment spans residues 1-54 (MALTPESPSSFPGLAATGSSVPEPPGGPNATLNSSWASPTEPSSLEDLVATGTI). 2 N-linked (GlcNAc...) asparagine glycosylation sites follow: N29 and N33. The span at 30–39 (ATLNSSWASP) shows a compositional bias: polar residues. A helical transmembrane segment spans residues 55-77 (GTLLSAMGVVGVVGNAYTLVVTC). At 78–87 (RSLRAVASMY) the chain is on the cytoplasmic side. A helical membrane pass occupies residues 88 to 113 (VYVVNLALADLLYLLSIPFIVATYVT). The Extracellular portion of the chain corresponds to 114-124 (KEWHFGDVGCR). C123 and C199 are joined by a disulfide. The helical transmembrane segment at 125–146 (VLFGLDFLTMHASIFTLTVMSS) threads the bilayer. Residues 147–167 (ERYAAVLRPLDTVQRPKGYRK) are Cytoplasmic-facing. The chain crosses the membrane as a helical span at residues 168-186 (LLALGTWLLALLLTLPVML). Topologically, residues 187-209 (AMRLVRRGPKSLCLPAWGPRAHR) are extracellular. Residues 210 to 232 (AYLTLLFATSIAGPGLLIGLLYA) form a helical membrane-spanning segment. Residues 233-258 (RLARAYRRSQRASFKRARRPGARALR) are Cytoplasmic-facing. A helical membrane pass occupies residues 259–284 (LVLGIVLLFWACFLPFWLWQLLAQYH). Residues 285–297 (QAPLAPRTARIVN) lie on the Extracellular side of the membrane. The helical transmembrane segment at 298–318 (YLTTCLTYGNSCANPFLYTLL) threads the bilayer. Topologically, residues 319 to 389 (TRNYRDHLRG…PAPEGPRAPA (71 aa)) are cytoplasmic. Residues 328–389 (GRVRGPGSGG…PAPEGPRAPA (62 aa)) are disordered. Residues 331–340 (RGPGSGGGRG) show a composition bias toward gly residues. Polar residues predominate over residues 355 to 368 (SGRSLSSCSPQPTD). A compositionally biased stretch (pro residues) spans 377–389 (PARPAPEGPRAPA).

It belongs to the G-protein coupled receptor 1 family. In terms of tissue distribution, most abundant expression in the heart and pancreas.

It localises to the cell membrane. High affinity receptor for urotensin-2 and urotensin-2B. The activity of this receptor is mediated by a G-protein that activate a phosphatidylinositol-calcium second messenger system. This is Urotensin-2 receptor (UTS2R) from Homo sapiens (Human).